Reading from the N-terminus, the 401-residue chain is Methyltransferase cfoC (401 aa).

D268 lines the S-adenosyl-L-methionine pocket. The Proton acceptor role is filled by H308.

This sequence belongs to the class I-like SAM-binding methyltransferase superfamily. Cation-independent O-methyltransferase family.

The protein operates within secondary metabolite biosynthesis; flavonoid biosynthesis. Methyltransferase; part of the gene cluster that mediates the biosynthesis of chlorflavonin, a fungal flavonoid with acetolactate synthase inhibitory activity. Within the pathway, cfoC is responsible for the methylation at position C8-OH of flavonoid. The pathway begins with the PKS-NRPS hybrid synthetase cfoA that uses benzoic acid or p-hydroxybenzoic acid as a starter unit with four rounds of chain elongation using malonyl-CoA to form the chalcone skeleton. Then, a new type of chalcone isomerase, cfoK, catalyzes the conversion of the chalcone into a flavanone by a histidine-mediated oxa-Michael addition mechanism. The desaturation of flavanone to flavone is catalyzed by a new type of flavone synthase, the flavin mononucleotide (FMN)-dependent oxidoreductase cfoJ. Monooxygenases cfoF, cfoG, and P450 cfoH are responsible for the hydroxylation of the flavonoid skeleton at sites C3, C8, and C2', respectively. Like cfoF, the dehydratase cfoI also plays a role in the hydroxylation of position C3. Methyltransferases cfoB, cfoC, and cfoD then catalyze the methylation of C7-OH, C8-OH, and C3-OH, respectively. Finally, the monooxygenase cfoE is responsible for the chlorination of flavonoid at position C3'. This is Methyltransferase cfoC from Aspergillus candidus.